We begin with the raw amino-acid sequence, 419 residues long: UDP-N-acetylglucosamine 1-carboxyvinyltransferase (419 aa).

Position 22 to 23 (22 to 23 (KN)) interacts with phosphoenolpyruvate. Residue Arg91 participates in UDP-N-acetyl-alpha-D-glucosamine binding. Residue Cys115 is the Proton donor of the active site. Cys115 carries the 2-(S-cysteinyl)pyruvic acid O-phosphothioketal modification. UDP-N-acetyl-alpha-D-glucosamine is bound by residues 120 to 124 (RPVDL), 160 to 163 (KVSV), Asp305, and Ile327.

This sequence belongs to the EPSP synthase family. MurA subfamily.

It is found in the cytoplasm. The enzyme catalyses phosphoenolpyruvate + UDP-N-acetyl-alpha-D-glucosamine = UDP-N-acetyl-3-O-(1-carboxyvinyl)-alpha-D-glucosamine + phosphate. Its pathway is cell wall biogenesis; peptidoglycan biosynthesis. Functionally, cell wall formation. Adds enolpyruvyl to UDP-N-acetylglucosamine. The sequence is that of UDP-N-acetylglucosamine 1-carboxyvinyltransferase from Klebsiella pneumoniae (strain 342).